The sequence spans 131 residues: Interleukin-13 (131 aa).

The first 18 residues, 1–18 (MALWLTVVIALTCLGGLA), serve as a signal peptide directing secretion. N-linked (GlcNAc...) asparagine glycans are attached at residues Asn-38, Asn-48, Asn-56, and Asn-71. Cystine bridges form between Cys-47/Cys-75 and Cys-63/Cys-89.

It belongs to the IL-4/IL-13 family. Interacts with IL13RA2.

It localises to the secreted. In terms of biological role, cytokine that plays important roles in allergic inflammation and immune response to parasite infection. Synergizes with IL2 in regulating interferon-gamma synthesis. Stimulates B-cell proliferation, and activation of eosinophils, basophils, and mast cells. Plays an important role in controlling IL33 activity by modulating the production of transmembrane and soluble forms of interleukin-1 receptor-like 1/IL1RL1. Displays the capacity to antagonize Th1-driven proinflammatory immune response and downregulates synthesis of many proinflammatory cytokines including IL1, IL6, IL10, IL12 and TNF-alpha through a mechanism that partially involves suppression of NF-kappa-B. Also functions on nonhematopoietic cells, including endothelial cells where it induces vascular cell adhesion protein 1/VCAM1, which is important in the recruitment of eosinophils. Exerts its biological effects through its receptors which comprises the IL4R chain and the IL13RA1 chain, to activate JAK1 and TYK2, leading to the activation of STAT6. Aside from IL13RA1, another receptor IL13RA2 acts as a high affinity decoy for IL13 and mediates internalization and depletion of extracellular IL13. In Canis lupus familiaris (Dog), this protein is Interleukin-13 (IL13).